An 89-amino-acid polypeptide reads, in one-letter code: Small ribosomal subunit protein uS15 (89 aa).

Residues 1–16 (MSVADIKKQDIVKDNG) show a composition bias toward basic and acidic residues. Positions 1–24 (MSVADIKKQDIVKDNGRSANDTGS) are disordered.

This sequence belongs to the universal ribosomal protein uS15 family. Part of the 30S ribosomal subunit. Forms a bridge to the 50S subunit in the 70S ribosome, contacting the 23S rRNA.

In terms of biological role, one of the primary rRNA binding proteins, it binds directly to 16S rRNA where it helps nucleate assembly of the platform of the 30S subunit by binding and bridging several RNA helices of the 16S rRNA. Its function is as follows. Forms an intersubunit bridge (bridge B4) with the 23S rRNA of the 50S subunit in the ribosome. In Ralstonia pickettii (strain 12J), this protein is Small ribosomal subunit protein uS15.